Reading from the N-terminus, the 81-residue chain is Photosystem I iron-sulfur center (81 aa).

4Fe-4S ferredoxin-type domains follow at residues 2 to 31 and 39 to 68; these read SHSV…MVPW and IASS…IRVY. Residues C11, C14, C17, C21, C48, C51, C54, and C58 each contribute to the [4Fe-4S] cluster site.

In terms of assembly, the cyanobacterial PSI reaction center is composed of one copy each of PsaA,B,C,D,E,F,I,J,K,L,M and X, and forms trimeric complexes. Requires [4Fe-4S] cluster as cofactor.

It is found in the cellular thylakoid membrane. The enzyme catalyses reduced [plastocyanin] + hnu + oxidized [2Fe-2S]-[ferredoxin] = oxidized [plastocyanin] + reduced [2Fe-2S]-[ferredoxin]. Its function is as follows. Apoprotein for the two 4Fe-4S centers FA and FB of photosystem I (PSI); essential for photochemical activity. FB is the terminal electron acceptor of PSI, donating electrons to ferredoxin. The C-terminus interacts with PsaA/B/D and helps assemble the protein into the PSI complex. Required for binding of PsaD and PsaE to PSI. PSI is a plastocyanin/cytochrome c6-ferredoxin oxidoreductase, converting photonic excitation into a charge separation, which transfers an electron from the donor P700 chlorophyll pair to the spectroscopically characterized acceptors A0, A1, FX, FA and FB in turn. In terms of biological role, mutant proteins with a 3Fe-4S center are unable to reconstitute PSI activity in vivo. In Synechocystis sp. (strain ATCC 27184 / PCC 6803 / Kazusa), this protein is Photosystem I iron-sulfur center.